A 279-amino-acid chain; its full sequence is 5'-nucleotidase SurE 1 (279 aa).

The a divalent metal cation site is built by aspartate 12, aspartate 13, serine 45, and asparagine 103.

It belongs to the SurE nucleotidase family. A divalent metal cation is required as a cofactor.

It localises to the cytoplasm. It carries out the reaction a ribonucleoside 5'-phosphate + H2O = a ribonucleoside + phosphate. Functionally, nucleotidase that shows phosphatase activity on nucleoside 5'-monophosphates. This chain is 5'-nucleotidase SurE 1, found in Chlamydia caviae (strain ATCC VR-813 / DSM 19441 / 03DC25 / GPIC) (Chlamydophila caviae).